The chain runs to 254 residues: Phosphoribosylaminoimidazole-succinocarboxamide synthase (254 aa).

This sequence belongs to the SAICAR synthetase family.

It carries out the reaction 5-amino-1-(5-phospho-D-ribosyl)imidazole-4-carboxylate + L-aspartate + ATP = (2S)-2-[5-amino-1-(5-phospho-beta-D-ribosyl)imidazole-4-carboxamido]succinate + ADP + phosphate + 2 H(+). Its pathway is purine metabolism; IMP biosynthesis via de novo pathway; 5-amino-1-(5-phospho-D-ribosyl)imidazole-4-carboxamide from 5-amino-1-(5-phospho-D-ribosyl)imidazole-4-carboxylate: step 1/2. This chain is Phosphoribosylaminoimidazole-succinocarboxamide synthase, found in Acidiphilium cryptum (strain JF-5).